Here is a 243-residue protein sequence, read N- to C-terminus: NH(3)-dependent NAD(+) synthetase (243 aa).

Gly-31–Ser-38 contributes to the ATP binding site. Asp-37 contacts Mg(2+). Arg-110 contributes to the deamido-NAD(+) binding site. An ATP-binding site is contributed by Thr-130. Residue Glu-135 coordinates Mg(2+). Positions 143 and 150 each coordinate deamido-NAD(+). The ATP site is built by Lys-159 and Ser-181. His-227–Lys-228 serves as a coordination point for deamido-NAD(+).

It belongs to the NAD synthetase family. In terms of assembly, homodimer.

It catalyses the reaction deamido-NAD(+) + NH4(+) + ATP = AMP + diphosphate + NAD(+) + H(+). It participates in cofactor biosynthesis; NAD(+) biosynthesis; NAD(+) from deamido-NAD(+) (ammonia route): step 1/1. Catalyzes the ATP-dependent amidation of deamido-NAD to form NAD. Uses ammonia as a nitrogen source. The polypeptide is NH(3)-dependent NAD(+) synthetase (Malacoplasma penetrans (strain HF-2) (Mycoplasma penetrans)).